Here is a 357-residue protein sequence, read N- to C-terminus: Serpentine receptor class epsilon-31 (357 aa).

A run of 7 helical transmembrane segments spans residues 28 to 48 (VISI…NLSI), 61 to 81 (LMFL…GKFI), 121 to 141 (LLIF…FGIL), 165 to 185 (IPIF…FIVI), 192 to 212 (IIAR…WLFV), 253 to 273 (LVAV…SLTF), and 283 to 303 (FVEN…MFSI).

The protein belongs to the nematode receptor-like protein sre family.

Its subcellular location is the membrane. This Caenorhabditis elegans protein is Serpentine receptor class epsilon-31 (sre-31).